Consider the following 732-residue polypeptide: DNA-directed RNA polymerase subunit beta' (732 aa).

Zn(2+) is bound by residues cysteine 70, cysteine 72, cysteine 85, and cysteine 88. Mg(2+) contacts are provided by aspartate 575, aspartate 577, and aspartate 579.

This sequence belongs to the RNA polymerase beta' chain family. RpoC1 subfamily. As to quaternary structure, in plastids the minimal PEP RNA polymerase catalytic core is composed of four subunits: alpha, beta, beta', and beta''. When a (nuclear-encoded) sigma factor is associated with the core the holoenzyme is formed, which can initiate transcription. Mg(2+) serves as cofactor. The cofactor is Zn(2+).

The protein localises to the plastid. It localises to the chloroplast. It carries out the reaction RNA(n) + a ribonucleoside 5'-triphosphate = RNA(n+1) + diphosphate. Functionally, DNA-dependent RNA polymerase catalyzes the transcription of DNA into RNA using the four ribonucleoside triphosphates as substrates. The sequence is that of DNA-directed RNA polymerase subunit beta' from Thalassiosira pseudonana (Marine diatom).